A 445-amino-acid polypeptide reads, in one-letter code: Glycine--tRNA ligase (445 aa).

Residues arginine 97 and glutamate 145 each coordinate substrate. ATP is bound by residues 177–179 (RNE), 187–192 (FRTCEF), 262–263 (EV), and 308–311 (GLTR). Residue 192–196 (FEQME) coordinates substrate. Position 304-308 (304-308 (ETSAG)) interacts with substrate.

The protein belongs to the class-II aminoacyl-tRNA synthetase family. As to quaternary structure, homodimer.

The protein localises to the cytoplasm. The enzyme catalyses tRNA(Gly) + glycine + ATP = glycyl-tRNA(Gly) + AMP + diphosphate. In terms of biological role, catalyzes the attachment of glycine to tRNA(Gly). This is Glycine--tRNA ligase from Borreliella burgdorferi (strain ZS7) (Borrelia burgdorferi).